Consider the following 315-residue polypeptide: Long form salivary protein D7L1 (315 aa).

Residues 1-18 form the signal peptide; it reads MIIVAVLLSFLAHLLVQA. Cystine bridges form between Cys-37–Cys-73 and Cys-69–Cys-128. Thromboxane A2 is bound at residue Trp-55. Trp-58 lines the leukotriene C4 pocket. Tyr-70 is a binding site for thromboxane A2. Gly-152 and Lys-170 together coordinate leukotriene C4. Lys-170 is a binding site for thromboxane A2. Cystine bridges form between Cys-178–Cys-211 and Cys-252–Cys-263.

It belongs to the PBP/GOBP family. Distal-lateral and median lobes of female salivary gland (at protein level). Not detected in male salivary gland (at protein level). Expressed in female salivary gland. Not detected in female carcass without salivary glands. Expressed in male salivary gland and other tissues.

It is found in the secreted. Modulates blood feeding of female mosquitoes on vertebrate species by binding and sequestering different mediators involved in the host response. Binds leukotriene C4, leukotriene D4, leukotriene E4 and stable analogs of thromboxane A2, U-46619 and carbocyclic TXA2. Binds weakly prostaglandins: PGD2, PGE2 and PGF2alpha. Does not bind leukotriene B4, biogenic amines, ADP, platelet activating phospholipid derivative PAF and arachidonic acid. Inhibits agonist-induced smooth muscle contraction. Inhibits platelet aggregation induced by low concentrations of collagen in thromboxane A2-dependent manner. This chain is Long form salivary protein D7L1, found in Anopheles stephensi (Indo-Pakistan malaria mosquito).